The chain runs to 215 residues: E3 ubiquitin-protein ligase NleG (215 aa).

The RING/U-box domain stretch occupies residues 136–189; sequence CPITLCIPETGVFVRNAKNSEICSLYDHNALTELIRRNAPHPLSREPFVPEMIV. A PDZ-binding motif motif is present at residues 213 to 215; sequence TRI.

This sequence belongs to the NleG E3 ligase family. Interacts with host GOPC (human protein). Post-translationally, two sizes of protein are detected upon expression in C.rodentium; only the smaller protein is secreted.

It localises to the secreted. The protein localises to the host cytoplasm. The catalysed reaction is S-ubiquitinyl-[E2 ubiquitin-conjugating enzyme]-L-cysteine + [acceptor protein]-L-lysine = [E2 ubiquitin-conjugating enzyme]-L-cysteine + N(6)-ubiquitinyl-[acceptor protein]-L-lysine.. Functionally, effector proteins function to alter host cell physiology and promote bacterial survival in host tissues. This protein is an E3 ubiquitin-protein ligase that probably interferes with the host's ubiquitination pathway and targets host proteins for proteasomal degradation. Can ubiquitinate ubiquitin, giving rise to polyubiquitin chains (in vitro). Does not complement an nleG8 deletion in C.rodentium. The chain is E3 ubiquitin-protein ligase NleG from Escherichia coli O157:H7.